Consider the following 133-residue polypeptide: Large ribosomal subunit protein bL20 (133 aa).

The protein belongs to the bacterial ribosomal protein bL20 family.

In terms of biological role, binds directly to 23S ribosomal RNA and is necessary for the in vitro assembly process of the 50S ribosomal subunit. It is not involved in the protein synthesizing functions of that subunit. The protein is Large ribosomal subunit protein bL20 of Chelativorans sp. (strain BNC1).